The sequence spans 150 residues: D-aminoacyl-tRNA deacylase (150 aa).

The Gly-cisPro motif, important for rejection of L-amino acids motif lies at 133-134; that stretch reads GP.

Belongs to the DTD family. Homodimer.

Its subcellular location is the cytoplasm. The catalysed reaction is glycyl-tRNA(Ala) + H2O = tRNA(Ala) + glycine + H(+). It catalyses the reaction a D-aminoacyl-tRNA + H2O = a tRNA + a D-alpha-amino acid + H(+). Its function is as follows. An aminoacyl-tRNA editing enzyme that deacylates mischarged D-aminoacyl-tRNAs. Also deacylates mischarged glycyl-tRNA(Ala), protecting cells against glycine mischarging by AlaRS. Acts via tRNA-based rather than protein-based catalysis; rejects L-amino acids rather than detecting D-amino acids in the active site. By recycling D-aminoacyl-tRNA to D-amino acids and free tRNA molecules, this enzyme counteracts the toxicity associated with the formation of D-aminoacyl-tRNA entities in vivo and helps enforce protein L-homochirality. In Micrococcus luteus (strain ATCC 4698 / DSM 20030 / JCM 1464 / CCM 169 / CCUG 5858 / IAM 1056 / NBRC 3333 / NCIMB 9278 / NCTC 2665 / VKM Ac-2230) (Micrococcus lysodeikticus), this protein is D-aminoacyl-tRNA deacylase.